A 142-amino-acid chain; its full sequence is Large ribosomal subunit protein uL11 (142 aa).

This sequence belongs to the universal ribosomal protein uL11 family. As to quaternary structure, part of the ribosomal stalk of the 50S ribosomal subunit. Interacts with L10 and the large rRNA to form the base of the stalk. L10 forms an elongated spine to which L12 dimers bind in a sequential fashion forming a multimeric L10(L12)X complex. Post-translationally, one or more lysine residues are methylated.

Its function is as follows. Forms part of the ribosomal stalk which helps the ribosome interact with GTP-bound translation factors. The chain is Large ribosomal subunit protein uL11 from Mesorhizobium japonicum (strain LMG 29417 / CECT 9101 / MAFF 303099) (Mesorhizobium loti (strain MAFF 303099)).